Reading from the N-terminus, the 715-residue chain is Fatty acid oxidation complex subunit alpha (715 aa).

The enoyl-CoA hydratase stretch occupies residues 1-190 (MTTTSAFMLN…KAGLVDDVVP (190 aa)). The tract at residues 306-714 (GPLNSVGILG…FWTNGETDQG (409 aa)) is 3-hydroxyacyl-CoA dehydrogenase.

This sequence in the N-terminal section; belongs to the enoyl-CoA hydratase/isomerase family. In the central section; belongs to the 3-hydroxyacyl-CoA dehydrogenase family. As to quaternary structure, heterotetramer of two alpha chains (FadJ) and two beta chains (FadI).

It localises to the cytoplasm. It catalyses the reaction a (3S)-3-hydroxyacyl-CoA = a (2E)-enoyl-CoA + H2O. The enzyme catalyses a 4-saturated-(3S)-3-hydroxyacyl-CoA = a (3E)-enoyl-CoA + H2O. It carries out the reaction a (3S)-3-hydroxyacyl-CoA + NAD(+) = a 3-oxoacyl-CoA + NADH + H(+). The catalysed reaction is (3S)-3-hydroxybutanoyl-CoA = (3R)-3-hydroxybutanoyl-CoA. The protein operates within lipid metabolism; fatty acid beta-oxidation. Its function is as follows. Catalyzes the formation of a hydroxyacyl-CoA by addition of water on enoyl-CoA. Also exhibits 3-hydroxyacyl-CoA epimerase and 3-hydroxyacyl-CoA dehydrogenase activities. The sequence is that of Fatty acid oxidation complex subunit alpha from Salmonella typhimurium (strain LT2 / SGSC1412 / ATCC 700720).